A 611-amino-acid polypeptide reads, in one-letter code: MGVVDPKTSQNTSKKRIDRRIYAEHFGPTTGDKVRLADTNLWLEVEYDLTSHIDHQPDIDSVNIGEEVKFGGGKVIRDGMGQSQLLGEQVADTIITNALIVDYSGIYKADIAIKEGRISGIGKAGNPDIQPNVTLPIGAATEIIAGEGKILTAGGIDSHIHFIAPQQCETALMSGVTTMLGGGTGPAEGTLATTCTPGAYHIHSMLKATDAIPMNIGFLGKGNVSLPAPIVEQIEAGAIGLKLHEDWGSTPKAIDNCLSVAEEYDVQVAIHTDTLNESGYLDSTLGAFKDRCIHTFHTEGAGGGHAPDILKAIGETNVLPSSTNPTRPFTINTIDEHLDMLMVCHHLSPAIAEDVAFAESRIRKETIAAEDILQDMGAISMMSSDSQAMGRVGEVIIRTWQTADKMKAQRGHLAPDQSAKTEQSLDNIMLSPTDSDSGNDNFRIKRYLAKYTINPAITHGISDEVGSLELGKWADLVLWSPAFFGVKPDLIIKGGLIAAAPMGDPNASISTPQPVHYRSMFGSFPKTVAQTCITFMSSAAIDKGVDRQLGLEKVIKAVHNIRKVRKQDMKFNSYCPQMEVNPETYEVYADGELLTCEPAEHLPMAQRYFLF.

One can recognise a Urease domain in the interval 154–611 (GGIDSHIHFI…LPMAQRYFLF (458 aa)). The Ni(2+) site is built by H159, H161, and K242. K242 is subject to N6-carboxylysine. Substrate is bound at residue H244. 2 residues coordinate Ni(2+): H271 and H297. H345 (proton donor) is an active-site residue. D385 contacts Ni(2+). Residues 411-434 (GHLAPDQSAKTEQSLDNIMLSPTD) form a disordered region. The span at 418-434 (SAKTEQSLDNIMLSPTD) shows a compositional bias: polar residues.

It belongs to the metallo-dependent hydrolases superfamily. Urease alpha subunit family. Heterotrimer of UreA (gamma), UreB (beta) and UreC (alpha) subunits. Three heterotrimers associate to form the active enzyme. The cofactor is Ni cation. In terms of processing, carboxylation allows a single lysine to coordinate two nickel ions.

It localises to the cytoplasm. The catalysed reaction is urea + 2 H2O + H(+) = hydrogencarbonate + 2 NH4(+). It participates in nitrogen metabolism; urea degradation; CO(2) and NH(3) from urea (urease route): step 1/1. This is Urease subunit alpha 2 from Psychrobacter cryohalolentis (strain ATCC BAA-1226 / DSM 17306 / VKM B-2378 / K5).